The following is a 29-amino-acid chain: Cytochrome b6-f complex subunit 8 (29 aa).

The chain crosses the membrane as a helical span at residues 3 to 23 (ILTLGWVSILALFTWSIAMVV).

The protein belongs to the PetN family. The 4 large subunits of the cytochrome b6-f complex are cytochrome b6, subunit IV (17 kDa polypeptide, PetD), cytochrome f and the Rieske protein, while the 4 small subunits are PetG, PetL, PetM and PetN. The complex functions as a dimer.

Its subcellular location is the cellular thylakoid membrane. Its function is as follows. Component of the cytochrome b6-f complex, which mediates electron transfer between photosystem II (PSII) and photosystem I (PSI), cyclic electron flow around PSI, and state transitions. This chain is Cytochrome b6-f complex subunit 8, found in Microcystis aeruginosa (strain NIES-843 / IAM M-2473).